A 360-amino-acid polypeptide reads, in one-letter code: MPKHRKQSKIKIYRITNYKKDKRSELDSNKFELEQQAVENKQDKQGKQDNQVQSENVVIVPTDSHNLDIWDEISLKEIQAGEHTNLFAEQSNYQNINLLQVSDIRLYLDKQLQFSSVDEQIYHEALVHPIMSKVIDPKRVLILGGGDGLALREVLKYETVLHVDLVDLDGSMIDMARNVPELVSLNKSAFFDNRVNTHVCDAKEFLSSPSSLYDVIIIDFPDPATELLSTLYTSELFARIATFLTEDGAFVCQSNSPADAPLVYWSIGNTIEHAGLTVKSYHTIVPSFGTDWGFHIAANSVYVLDQIEQLYVVPTPRTLPSLLFPLFQFKEEHLEQRNFALLNSESNLILHQCYKKEMEF.

Residues D68 to N299 enclose the PABS domain. Q94 contributes to the S-methyl-5'-thioadenosine binding site. The spermidine site is built by H123 and D147. S-methyl-5'-thioadenosine is bound by residues D167 and D201–A202. D219 (proton acceptor) is an active-site residue.

This sequence belongs to the spermidine/spermine synthase family. Homodimer or homotetramer.

The protein resides in the cytoplasm. The enzyme catalyses S-adenosyl 3-(methylsulfanyl)propylamine + putrescine = S-methyl-5'-thioadenosine + spermidine + H(+). It participates in amine and polyamine biosynthesis; spermidine biosynthesis; spermidine from putrescine: step 1/1. In terms of biological role, catalyzes the irreversible transfer of a propylamine group from the amino donor S-adenosylmethioninamine (decarboxy-AdoMet) to putrescine (1,4-diaminobutane) to yield spermidine. This chain is Polyamine aminopropyltransferase 2, found in Bacillus anthracis.